Consider the following 401-residue polypeptide: Exodeoxyribonuclease 7 large subunit (401 aa).

It belongs to the XseA family. In terms of assembly, heterooligomer composed of large and small subunits.

It is found in the cytoplasm. The catalysed reaction is Exonucleolytic cleavage in either 5'- to 3'- or 3'- to 5'-direction to yield nucleoside 5'-phosphates.. In terms of biological role, bidirectionally degrades single-stranded DNA into large acid-insoluble oligonucleotides, which are then degraded further into small acid-soluble oligonucleotides. This is Exodeoxyribonuclease 7 large subunit from Lachnoclostridium phytofermentans (strain ATCC 700394 / DSM 18823 / ISDg) (Clostridium phytofermentans).